Consider the following 88-residue polypeptide: Small ribosomal subunit protein uS17 (88 aa).

Belongs to the universal ribosomal protein uS17 family. In terms of assembly, part of the 30S ribosomal subunit.

Its function is as follows. One of the primary rRNA binding proteins, it binds specifically to the 5'-end of 16S ribosomal RNA. The protein is Small ribosomal subunit protein uS17 of Pseudomonas fluorescens (strain ATCC BAA-477 / NRRL B-23932 / Pf-5).